Reading from the N-terminus, the 384-residue chain is Succinyl-diaminopimelate desuccinylase (384 aa).

Residue H71 participates in Zn(2+) binding. The active site involves D73. A Zn(2+)-binding site is contributed by D104. Catalysis depends on E138, which acts as the Proton acceptor. 3 residues coordinate Zn(2+): E139, E167, and H353.

The protein belongs to the peptidase M20A family. DapE subfamily. Homodimer. The cofactor is Zn(2+). Requires Co(2+) as cofactor.

The enzyme catalyses N-succinyl-(2S,6S)-2,6-diaminopimelate + H2O = (2S,6S)-2,6-diaminopimelate + succinate. Its pathway is amino-acid biosynthesis; L-lysine biosynthesis via DAP pathway; LL-2,6-diaminopimelate from (S)-tetrahydrodipicolinate (succinylase route): step 3/3. In terms of biological role, catalyzes the hydrolysis of N-succinyl-L,L-diaminopimelic acid (SDAP), forming succinate and LL-2,6-diaminopimelate (DAP), an intermediate involved in the bacterial biosynthesis of lysine and meso-diaminopimelic acid, an essential component of bacterial cell walls. This Aromatoleum aromaticum (strain DSM 19018 / LMG 30748 / EbN1) (Azoarcus sp. (strain EbN1)) protein is Succinyl-diaminopimelate desuccinylase.